The primary structure comprises 551 residues: Arginine--tRNA ligase (551 aa).

The short motif at 125 to 135 (ANPTGPLHIGH) is the 'HIGH' region element.

Belongs to the class-I aminoacyl-tRNA synthetase family. As to quaternary structure, monomer.

It localises to the cytoplasm. The catalysed reaction is tRNA(Arg) + L-arginine + ATP = L-arginyl-tRNA(Arg) + AMP + diphosphate. The polypeptide is Arginine--tRNA ligase (Nitratidesulfovibrio vulgaris (strain DP4) (Desulfovibrio vulgaris)).